Reading from the N-terminus, the 447-residue chain is MTVDEQVSNYYDMLLKRNAGEPEFHQAVAEVLESLKIVLEKDPHYADYGLIQRLCEPERQLIFRVPWVDDNGQVHVNRGFRVQFNSALGPYKGGLRFHPSVNLGIVKFLGFEQIFKNSLTGLPIGGGKGGSDFDPKGKSELEIMRFCQSFMTELHRHIGEYRDVPAGDIGVGGREIGYLFGHYRRLANQHESGVLTGKGLTWGGSLVRTEATGFGTVYFVQEMIKAEGETLEGKKVIVSGSGNVATYAIQKVQELGAVVVGFSDSSGWVSTPNGVDVAKLREIKEVRRARVSSYADEVEGAEYHTDGSIWDLTADIALPCATQNELDGDNARTLADNGCRFVAEGANMPSTPEAIDVFRERGVLFGPGKAANAGGVATSALEMQQNASRDSWSFEYTDERLHRIMKNIFKSCADTAKEYGHEKNYVVGANIAGFKKVADAMLAQGVI.

Substrate-binding residues include lysine 92, glutamine 113, and lysine 116. The active-site Proton donor is the lysine 128. Residue glycine 167 participates in substrate binding. The NADP(+) site is built by threonine 212 and asparagine 243. Serine 379 provides a ligand contact to substrate.

It belongs to the Glu/Leu/Phe/Val dehydrogenases family. As to quaternary structure, homohexamer.

It catalyses the reaction L-glutamate + NADP(+) + H2O = 2-oxoglutarate + NH4(+) + NADPH + H(+). Functionally, catalyzes the reversible oxidative deamination of glutamate to alpha-ketoglutarate and ammonia. The protein is NADP-specific glutamate dehydrogenase (gdh) of Corynebacterium efficiens (strain DSM 44549 / YS-314 / AJ 12310 / JCM 11189 / NBRC 100395).